Here is a 373-residue protein sequence, read N- to C-terminus: Probable jasmonic acid carboxyl methyltransferase 1 (373 aa).

Residue Tyr-18 coordinates S-adenosyl-L-homocysteine. Residue Gln-25 participates in jasmonate binding. S-adenosyl-L-homocysteine contacts are provided by Cys-59, Asn-64, Asp-96, Leu-97, Ser-135, and Phe-136. Jasmonate-binding residues include His-156 and Trp-157. Mg(2+)-binding residues include Asn-174, Asp-260, Phe-262, and Asn-263.

Belongs to the methyltransferase superfamily. Type-7 methyltransferase family. Mg(2+) is required as a cofactor.

The protein resides in the cytoplasm. Its subcellular location is the nucleus. The enzyme catalyses jasmonate + S-adenosyl-L-methionine = methyl (-)-jasmonate + S-adenosyl-L-homocysteine. It participates in lipid metabolism; oxylipin biosynthesis. Its function is as follows. Catalyzes the methylation of jasmonate into methyljasmonate, a plant volatile that acts as an important cellular regulator mediating diverse developmental processes and defense responses. The sequence is that of Probable jasmonic acid carboxyl methyltransferase 1 from Theobroma cacao (Cacao).